The primary structure comprises 295 residues: Probable protein phosphatase 2C 54 (295 aa).

In terms of domain architecture, PPM-type phosphatase spans 78-289; the sequence is GHGVVSVMGR…ENINVIVIDL (212 aa). Mn(2+) is bound by residues D112, G113, D228, and E280.

It belongs to the PP2C family. The cofactor is Mg(2+). Mn(2+) is required as a cofactor.

It carries out the reaction O-phospho-L-seryl-[protein] + H2O = L-seryl-[protein] + phosphate. The enzyme catalyses O-phospho-L-threonyl-[protein] + H2O = L-threonyl-[protein] + phosphate. The sequence is that of Probable protein phosphatase 2C 54 from Arabidopsis thaliana (Mouse-ear cress).